Here is a 98-residue protein sequence, read N- to C-terminus: NADH-ubiquinone oxidoreductase chain 4L (98 aa).

The next 3 helical transmembrane spans lie at 1–21, 29–49, and 61–81; these read MPSI…GMLI, SLLC…LTAL, and IVLL…LVMV.

It belongs to the complex I subunit 4L family. In terms of assembly, core subunit of respiratory chain NADH dehydrogenase (Complex I) which is composed of 45 different subunits.

The protein localises to the mitochondrion inner membrane. It carries out the reaction a ubiquinone + NADH + 5 H(+)(in) = a ubiquinol + NAD(+) + 4 H(+)(out). Functionally, core subunit of the mitochondrial membrane respiratory chain NADH dehydrogenase (Complex I) which catalyzes electron transfer from NADH through the respiratory chain, using ubiquinone as an electron acceptor. Part of the enzyme membrane arm which is embedded in the lipid bilayer and involved in proton translocation. The chain is NADH-ubiquinone oxidoreductase chain 4L (MT-ND4L) from Lepus europaeus (European hare).